Reading from the N-terminus, the 100-residue chain is NADH-quinone oxidoreductase subunit K (100 aa).

3 helical membrane-spanning segments follow: residues 4–24 (LQHGLILAAILFALGLTGLLI), 28–48 (LLFMLISLEIMINAAALAFVV), and 60–80 (VMYILAISLAAAEASIGLALL).

This sequence belongs to the complex I subunit 4L family. In terms of assembly, NDH-1 is composed of 13 different subunits. Subunits NuoA, H, J, K, L, M, N constitute the membrane sector of the complex.

Its subcellular location is the cell inner membrane. The catalysed reaction is a quinone + NADH + 5 H(+)(in) = a quinol + NAD(+) + 4 H(+)(out). In terms of biological role, NDH-1 shuttles electrons from NADH, via FMN and iron-sulfur (Fe-S) centers, to quinones in the respiratory chain. The immediate electron acceptor for the enzyme in this species is believed to be ubiquinone. Couples the redox reaction to proton translocation (for every two electrons transferred, four hydrogen ions are translocated across the cytoplasmic membrane), and thus conserves the redox energy in a proton gradient. The protein is NADH-quinone oxidoreductase subunit K of Edwardsiella ictaluri (strain 93-146).